The chain runs to 382 residues: S-adenosylmethionine synthase (382 aa).

H15 is an ATP binding site. D17 lines the Mg(2+) pocket. A K(+)-binding site is contributed by E43. Residues E56 and Q99 each coordinate L-methionine. A flexible loop region spans residues 99–109 (QSPDINQGVDR). ATP-binding positions include 164–166 (DAK), 230–231 (RF), D239, 245–246 (RK), A262, and K266. L-methionine is bound at residue D239. K270 contacts L-methionine.

It belongs to the AdoMet synthase family. As to quaternary structure, homotetramer; dimer of dimers. Mg(2+) is required as a cofactor. K(+) serves as cofactor.

Its subcellular location is the cytoplasm. It catalyses the reaction L-methionine + ATP + H2O = S-adenosyl-L-methionine + phosphate + diphosphate. Its pathway is amino-acid biosynthesis; S-adenosyl-L-methionine biosynthesis; S-adenosyl-L-methionine from L-methionine: step 1/1. Catalyzes the formation of S-adenosylmethionine (AdoMet) from methionine and ATP. The overall synthetic reaction is composed of two sequential steps, AdoMet formation and the subsequent tripolyphosphate hydrolysis which occurs prior to release of AdoMet from the enzyme. The protein is S-adenosylmethionine synthase of Psychromonas ingrahamii (strain DSM 17664 / CCUG 51855 / 37).